We begin with the raw amino-acid sequence, 597 residues long: ATP-dependent RNA helicase DBP9 (597 aa).

Residues 1–13 (MAMKRKLNEHDVP) show a composition bias toward basic and acidic residues. The segment at 1-43 (MAMKRKLNEHDVPEPESPQSPKRRASDASQSEPASPPAPTPAK) is disordered. Residues 47–75 (ASFAELQLEPRLLRGIRDQKWGSPTAVQS) carry the Q motif motif. Positions 78–249 (IPLALQGRDI…SLLCNDPVVL (172 aa)) constitute a Helicase ATP-binding domain. 91 to 98 (SGTGTGKT) serves as a coordination point for ATP. The DEAD box signature appears at 197–200 (DEGD). Residues 260–469 (RVKQYVIKCA…NYNFDMKRLE (210 aa)) enclose the Helicase C-terminal domain. Positions 352-374 (SQKKADESRPKKKPKTDKEAKND) are disordered.

It belongs to the DEAD box helicase family. DDX56/DBP9 subfamily.

It localises to the nucleus. Its subcellular location is the nucleolus. It carries out the reaction ATP + H2O = ADP + phosphate + H(+). Its function is as follows. ATP-binding RNA helicase involved in the biogenesis of 60S ribosomal subunits and is required for the normal formation of 25S and 5.8S rRNAs. The protein is ATP-dependent RNA helicase DBP9 (DBP9) of Phaeosphaeria nodorum (strain SN15 / ATCC MYA-4574 / FGSC 10173) (Glume blotch fungus).